The primary structure comprises 1149 residues: MFQTKLRNESWEDLQKMSCTTEIQVAFILSSFMTFISGLIILLIFRLIWRTVKKWQIIKGTGIILELFTSGSIRRNHVRSLHFHGRFRDRIEMLLSAQTFVGQVLVILVFVLSIGSLIIYFINSADPVGSCSSYEDKTIPVDLVFNAFFSFYFGLRFMAADDKIKFWLEMNSIVDIFTIPPTFISYYLKSNWLGLRFLRALRLLELPRILQILRAIKTSNSVKFSKLLSIVLSTWFTAAGFIHLVENSGDPWLKGRNSQNISYFDSVYLVMATTSTVGFGDVVAKTSLGRTFIIFFTLGSLILFANYIPEMVELFANKRKYTSSYEALKGKKFIVVCGNITVDSVTAFLRNFLRRKSGEINTEIVFLGESPPSLELETIFKCYLAYTTFISGSAMKWEDLRRVAVESAEACLIIANPLCSDSHAEDISNIMRVLSIKNYDSTTRIIIQILQSHNKVYLPKIPSWDWDAGDNIICFAELKLGFIAQGCLVPGLCTFLTSLFVEQNRKVTPKQTWQKHFLNSMKNNILTQRLSDDFAGMSFPEVARLCFLKMHLLLIAIEYKSLFTDGFCGLILNPPAQIRIHKNTLGFFIAETPKEVKRALFYCSVCHDDVFIPELITNCGCKSRSRQHVTVPAVKIVKKCMKGLSSHMAGQDSPPRVHASPSRISDFTTRTFPHDVEQDSDQLDSSGMFHWCKPISLDKVTLKRSRKLKHKFRNHIVACVFGDAQSALIGLRNFVMPLRASNYTRKELKDIVFIGSLDYLQREWRFLRNFPQIYILPGCALYSGDLHAANIEQCSMCVVLSPPSKPSSSQTLVDAEAILATLTIGSLQIDSSSDSSPSVSEETASCTNGHNEKSNCRKVPILIELKNPSNIHFIEQLGGLEGSLQETNLHLSTAFSTGTVFSGSFLDSLLATSFYNYHVLELLQMLVTGGVSSQLEQHLDKDKVYGVADSCTTLLSGRNRCKMGLLSLHQTILSDVNPRNTFGQLFCGSLDLFGILCVGLYRIIDEEELNPENKRFVITRPANEFKLLPSDLVFCAIPFSTACYKRNEEFSSQKSYEIIKEASQTTETHSDTNFPPTIYSVDETSYSPVYSYPSRTNSVYSANQTARNQIRTNSSITSQKPLGDNAKKNGKKISDEISDEDPFAYSEPL.

Residues 1-24 are Extracellular-facing; it reads MFQTKLRNESWEDLQKMSCTTEIQ. The helical transmembrane segment at 25-45 threads the bilayer; it reads VAFILSSFMTFISGLIILLIF. Residues 46–101 lie on the Cytoplasmic side of the membrane; that stretch reads RLIWRTVKKWQIIKGTGIILELFTSGSIRRNHVRSLHFHGRFRDRIEMLLSAQTFV. A helical membrane pass occupies residues 102 to 122; it reads GQVLVILVFVLSIGSLIIYFI. Residues 123–138 lie on the Extracellular side of the membrane; the sequence is NSADPVGSCSSYEDKT. The helical transmembrane segment at 139–159 threads the bilayer; the sequence is IPVDLVFNAFFSFYFGLRFMA. The Cytoplasmic segment spans residues 160 to 163; that stretch reads ADDK. The helical transmembrane segment at 164–184 threads the bilayer; the sequence is IKFWLEMNSIVDIFTIPPTFI. At 185–188 the chain is on the extracellular side; sequence SYYL. A helical; Voltage-sensor transmembrane segment spans residues 189–209; sequence KSNWLGLRFLRALRLLELPRI. The Cytoplasmic segment spans residues 210–226; the sequence is LQILRAIKTSNSVKFSK. A helical transmembrane segment spans residues 227–247; sequence LLSIVLSTWFTAAGFIHLVEN. Residues 248–259 are Extracellular-facing; the sequence is SGDPWLKGRNSQ. Residues 260–282 constitute an intramembrane region (pore-forming); sequence NISYFDSVYLVMATTSTVGFGDV. Residues 276-279 carry the Selectivity for potassium motif; it reads TVGF. Residues 283-291 lie on the Extracellular side of the membrane; it reads VAKTSLGRT. The helical transmembrane segment at 292–312 threads the bilayer; that stretch reads FIIFFTLGSLILFANYIPEMV. Residues 313-1149 are Cytoplasmic-facing; the sequence is ELFANKRKYT…EDPFAYSEPL (837 aa). RCK N-terminal domains follow at residues 331-473 and 713-884; these read KKFI…DNII and RNHI…EGSL. A compositionally biased stretch (low complexity) spans 829-845; sequence IDSSSDSSPSVSEETAS. Disordered stretches follow at residues 829 to 851 and 1106 to 1149; these read IDSS…NGHN and ARNQ…SEPL. The segment covering 1106-1120 has biased composition (polar residues); sequence ARNQIRTNSSITSQK.

Belongs to the potassium channel family. Calcium-activated (TC 1.A.1.3) subfamily. KCa5.1/KCNU1 sub-subfamily. As to quaternary structure, homotetramer; which constitutes the calcium-activated potassium channel. Interacts with LRRC52; this interaction changes some channel gating properties, such as shifting gating to more negative potentials at a given pH. As to expression, testis-specific.

It localises to the cell membrane. The protein resides in the cell projection. Its subcellular location is the cilium. The protein localises to the flagellum membrane. It carries out the reaction K(+)(in) = K(+)(out). With respect to regulation, regulated by changes in cytosolic pH; activated by alkalization. VU0546110 acts as a selective inhibitor. The auxiliary subunit LRRC52 shifts the activation of KCNU1 to more negative potentials at a given pH. Its function is as follows. Testis-specific potassium channel activated by both intracellular pH and membrane voltage that mediates export of K(+). Represents the primary spermatozoan K(+) current. The channel underlies a pH-triggered membrane hyperpolarization during the process of sperm capacitation, as sperm encounter the alkaline environment near the ovum in the female reproductive tract, thereby playing an essential for male fertility. The sequence is that of Potassium channel subfamily U member 1 (KCNU1) from Macaca fascicularis (Crab-eating macaque).